A 392-amino-acid chain; its full sequence is Putative 8-amino-7-oxononanoate synthase (392 aa).

Arg22 serves as a coordination point for substrate. Residue 109-110 (GW) coordinates pyridoxal 5'-phosphate. A substrate-binding site is contributed by His139. Pyridoxal 5'-phosphate-binding positions include Ser187, 212 to 215 (DEAH), and 239 to 242 (TFSK). Lys242 carries the N6-(pyridoxal phosphate)lysine modification. Thr356 is a substrate binding site.

The protein belongs to the class-II pyridoxal-phosphate-dependent aminotransferase family. BioF subfamily. In terms of assembly, homodimer. The cofactor is pyridoxal 5'-phosphate.

It carries out the reaction 6-carboxyhexanoyl-[ACP] + L-alanine + H(+) = (8S)-8-amino-7-oxononanoate + holo-[ACP] + CO2. It participates in cofactor biosynthesis; biotin biosynthesis. Catalyzes the decarboxylative condensation of pimeloyl-[acyl-carrier protein] and L-alanine to produce 8-amino-7-oxononanoate (AON), [acyl-carrier protein], and carbon dioxide. The sequence is that of Putative 8-amino-7-oxononanoate synthase (bioF) from Paramagnetospirillum magneticum (strain ATCC 700264 / AMB-1) (Magnetospirillum magneticum).